We begin with the raw amino-acid sequence, 240 residues long: Venom hemolysin-like protein 1 (240 aa).

The signal sequence occupies residues M1–A18. Residues E25 to T50 are disordered. Residues T39 to T50 show a composition bias toward polar residues.

As to expression, expressed by the venom gland (anterior main gland) (at protein level).

It localises to the secreted. This is Venom hemolysin-like protein 1 from Platymeris rhadamanthus (Red spot assassin bug).